The chain runs to 961 residues: Glycine dehydrogenase (decarboxylating) (961 aa).

K709 carries the N6-(pyridoxal phosphate)lysine modification.

The protein belongs to the GcvP family. In terms of assembly, the glycine cleavage system is composed of four proteins: P, T, L and H. The cofactor is pyridoxal 5'-phosphate.

The catalysed reaction is N(6)-[(R)-lipoyl]-L-lysyl-[glycine-cleavage complex H protein] + glycine + H(+) = N(6)-[(R)-S(8)-aminomethyldihydrolipoyl]-L-lysyl-[glycine-cleavage complex H protein] + CO2. The glycine cleavage system catalyzes the degradation of glycine. The P protein binds the alpha-amino group of glycine through its pyridoxal phosphate cofactor; CO(2) is released and the remaining methylamine moiety is then transferred to the lipoamide cofactor of the H protein. The sequence is that of Glycine dehydrogenase (decarboxylating) from Streptomyces griseus subsp. griseus (strain JCM 4626 / CBS 651.72 / NBRC 13350 / KCC S-0626 / ISP 5235).